The chain runs to 475 residues: Cytosolic non-specific dipeptidase (475 aa).

Position 2 is an N-acetylalanine (Ala-2). Lys-9 bears the N6-acetyllysine mark. Phosphoserine is present on Ser-58. His-99 is a binding site for Mn(2+). Asp-101 is a catalytic residue. Asp-132 provides a ligand contact to Mn(2+). Glu-166 (proton acceptor) is an active-site residue. Residues Glu-166–Glu-167, Asp-195, and His-228 contribute to the substrate site. Mn(2+)-binding residues include Glu-167 and Asp-195. Ser-299 bears the Phosphoserine mark. Residues Thr-330, Arg-343, Ser-417, and His-445 each coordinate substrate. His-445 is a binding site for Mn(2+).

It belongs to the peptidase M20A family. As to quaternary structure, homodimer. It depends on Mn(2+) as a cofactor.

The protein resides in the cytoplasm. The catalysed reaction is Hydrolysis of dipeptides, preferentially hydrophobic dipeptides including prolyl amino acids.. The enzyme catalyses L-threonyl-L-threonine + H2O = 2 L-threonine. It catalyses the reaction L-threonyl-L-serine + H2O = L-threonine + L-serine. It carries out the reaction L-seryl-L-threonine + H2O = L-threonine + L-serine. The catalysed reaction is L-cysteinylglycine + H2O = L-cysteine + glycine. The enzyme catalyses (S)-lactate + L-phenylalanine = N-[(S)-lactoyl]-L-phenylalanine + H2O. Functionally, catalyzes the peptide bond hydrolysis in dipeptides, displaying a non-redundant activity toward threonyl dipeptides. Mediates threonyl dipeptide catabolism in a tissue-specific way. Has high dipeptidase activity toward cysteinylglycine, an intermediate metabolite in glutathione metabolism. Metabolizes N-lactoyl-amino acids, both through hydrolysis to form lactic acid and amino acids, as well as through their formation by reverse proteolysis. Plays a role in the regulation of cell cycle arrest and apoptosis. This Pongo abelii (Sumatran orangutan) protein is Cytosolic non-specific dipeptidase (CNDP2).